The following is an 88-amino-acid chain: MANIPSAKKRARQAEKRRKHNQSQRSMMRTYIKRVVNAIKAGDKAQAEEAYKVAVPVIDRMATRGLIHKNKAARHKSRLNQHLRNLQG.

The disordered stretch occupies residues 1–27 (MANIPSAKKRARQAEKRRKHNQSQRSM). Basic residues predominate over residues 7-22 (AKKRARQAEKRRKHNQ).

It belongs to the bacterial ribosomal protein bS20 family.

Binds directly to 16S ribosomal RNA. In Alkalilimnicola ehrlichii (strain ATCC BAA-1101 / DSM 17681 / MLHE-1), this protein is Small ribosomal subunit protein bS20.